The sequence spans 156 residues: Large ribosomal subunit protein eL29 (156 aa).

The segment covering 1 to 26 (MAKSKNHTTHNQSRKWHRNGIKKPRS) has biased composition (basic residues). 2 disordered regions span residues 1-35 (MAKS…LKGV) and 116-156 (RRLC…VKAP). K5 is subject to N6-methyllysine. S31 carries the post-translational modification Phosphoserine. An N6-acetyllysine modification is found at K33. Repeat copies occupy residues 129–136 (AEAKAPAK) and 137–144 (AQAKAPAQ). The tract at residues 129 to 144 (AEAKAPAKAQAKAPAQ) is 2 X 8 AA tandem repeats of A-X-A-K-A-P-A-[KQ]. Over residues 134-156 (PAKAQAKAPAQAPKGAQAPVKAP) the composition is skewed to low complexity.

This sequence belongs to the eukaryotic ribosomal protein eL29 family. As to quaternary structure, component of the large ribosomal subunit.

Its subcellular location is the cytoplasm. Component of the large ribosomal subunit. The ribosome is a large ribonucleoprotein complex responsible for the synthesis of proteins in the cell. The polypeptide is Large ribosomal subunit protein eL29 (Rpl29) (Rattus norvegicus (Rat)).